A 496-amino-acid polypeptide reads, in one-letter code: Versicolorin B desaturase stcL (496 aa).

Residues phenylalanine 3 to valine 23 form a helical membrane-spanning segment. Cysteine 440 is a binding site for heme.

This sequence belongs to the cytochrome P450 family. Requires heme as cofactor.

The protein localises to the membrane. It catalyses the reaction versicolorin B + NADPH + O2 + H(+) = versicolorin A + NADP(+) + 2 H2O. It participates in mycotoxin biosynthesis; sterigmatocystin biosynthesis. Functionally, cytochrome P450 monooxygenase; part of the gene cluster that mediates the biosynthesis of sterigmatocystin (ST), a polyketide-derived furanocoumarin which is part of the most toxic and carcinogenic compounds among the known mycotoxins. The first step in the biosynthesis of sterigmatocystin is the production of hexanoate by the fatty acid synthase (FAS) units stcJ and stcK. The polyketide backbone is assembled by the non-reducing polyketide synthase stcA by condensation of the starter hexanoyl-CoA and 7 malonyl-CoA extender units followed by cyclization and release of norsolorinic acid. Norsolorinic acid is the first stable intermediate in the biosynthesis of sterigmatocystin and is converted into averantin (AVN) by the ketoreductase stcE which reduces the hexanoate ketone to an alcohol. Averantin is then oxidized into 5'-hydroxyaverantin (HAVN) by the cytochrome P450 monooxygenase stcF. 5'-hydroxyaverantin is further converted to 5'-oxyaverantin (OAVN) by the 5'-hydroxyaverantin dehydrogenase stcG. The next step is the conversion of OAVN into averufin (AVF) which is catalyzed by a yet to be identified enzyme. The cytochrome P450 monooxygenase stcB and the flavin-binding monooxygenase stcW are both required for the conversion of averufin to 1-hydroxyversicolorone. The esterase stcI probably catalyzes the formation of versiconal hemiacetal acetate from 1-hydroxyversicolorone. The oxydoreductase stcN then probably catalyzes the biosynthetic step from versiconal to versicolorin B (VERB). The next step is performed by the versicolorin B desaturase stcL to produce versicolorin A (VERA). The ketoreductase stcU and the cytochrome P450 monooxygenase stcS are involved in the conversion of versicolorin A to demethylsterigmatocystin. The Baeyer-Villiger oxidas stcQ and the reductase stcR might be involved in the biosynthetic step from versicolorin A to demethylsterigmatocystin. The final step in the biosynthesis of sterigmatocystin is the methylation of demethylsterigmatocystin catalyzed by the methyltransferase stcP. This Emericella nidulans (strain FGSC A4 / ATCC 38163 / CBS 112.46 / NRRL 194 / M139) (Aspergillus nidulans) protein is Versicolorin B desaturase stcL.